The following is a 177-amino-acid chain: Large ribosomal subunit protein uL6 (177 aa).

This sequence belongs to the universal ribosomal protein uL6 family. In terms of assembly, part of the 50S ribosomal subunit.

Functionally, this protein binds to the 23S rRNA, and is important in its secondary structure. It is located near the subunit interface in the base of the L7/L12 stalk, and near the tRNA binding site of the peptidyltransferase center. The protein is Large ribosomal subunit protein uL6 of Cupriavidus necator (strain ATCC 17699 / DSM 428 / KCTC 22496 / NCIMB 10442 / H16 / Stanier 337) (Ralstonia eutropha).